The chain runs to 333 residues: Methionyl-tRNA formyltransferase (333 aa).

106 to 109 (SLLP) is a (6S)-5,6,7,8-tetrahydrofolate binding site.

It belongs to the Fmt family.

The catalysed reaction is L-methionyl-tRNA(fMet) + (6R)-10-formyltetrahydrofolate = N-formyl-L-methionyl-tRNA(fMet) + (6S)-5,6,7,8-tetrahydrofolate + H(+). In terms of biological role, attaches a formyl group to the free amino group of methionyl-tRNA(fMet). The formyl group appears to play a dual role in the initiator identity of N-formylmethionyl-tRNA by promoting its recognition by IF2 and preventing the misappropriation of this tRNA by the elongation apparatus. The chain is Methionyl-tRNA formyltransferase from Elusimicrobium minutum (strain Pei191).